A 223-amino-acid polypeptide reads, in one-letter code: MSDEEARQSGGSSQAGVVTVSDVQELMRRKEEIEAQIKANYDVLESQKGIGMNEPLVDCEGYPRSDVDLYQVRTARHNIICLQNDHKAVMKQVEEALHQLHARDKEKQARDMAEAHKEAMSRKLGQSESQGPPRAFAKVNSISPGSPASIAGLQVDDEIVEFGSVNTQNFQSLHNIGSVVQHSEGKPLNVTVIRRGEKHQLRLVPTRWAGKGLLGCNIIPLQR.

Over residues 103 to 121 (RDKEKQARDMAEAHKEAMS) the composition is skewed to basic and acidic residues. Residues 103–141 (RDKEKQARDMAEAHKEAMSRKLGQSESQGPPRAFAKVNS) form a disordered region. Positions 108–195 (QARDMAEAHK…KPLNVTVIRR (88 aa)) constitute a PDZ domain. Position 129 is a phosphoserine (Ser-129).

It belongs to the proteasome subunit p27 family. In terms of assembly, interacts with PSMC3. Part of a transient complex (modulator) containing PSMD9, PSMC6 and PSMC3 formed during the assembly of the 26S proteasome. As to expression, expressed in all tissues tested, highly expressed in liver and kidney.

Acts as a chaperone during the assembly of the 26S proteasome, specifically of the base subcomplex of the PA700/19S regulatory complex (RC). During the base subcomplex assembly is part of an intermediate PSMD9:PSMC6:PSMC3 module, also known as modulator trimer complex; PSMD9 is released during the further base assembly process. The sequence is that of 26S proteasome non-ATPase regulatory subunit 9 (PSMD9) from Homo sapiens (Human).